The sequence spans 453 residues: Bifunctional protein GlmU (453 aa).

A pyrophosphorylase region spans residues 1 to 225 (MNIVILAAGT…EWETLGVNSK (225 aa)). UDP-N-acetyl-alpha-D-glucosamine contacts are provided by residues 6–9 (LAAG), Lys20, Gln71, 76–77 (GT), 98–100 (YGD), Gly135, Glu150, Asn165, and Asn223. Residue Asp100 participates in Mg(2+) binding. Residue Asn223 participates in Mg(2+) binding. The interval 226–246 (AQLAELERIHQRNVADALLVD) is linker. Residues 247–453 (GVTLADPARV…GYVRPVKKKS (207 aa)) are N-acetyltransferase. UDP-N-acetyl-alpha-D-glucosamine-binding residues include Arg329 and Lys347. Residue His359 is the Proton acceptor of the active site. Positions 362 and 373 each coordinate UDP-N-acetyl-alpha-D-glucosamine. Acetyl-CoA contacts are provided by residues Ala376, 382–383 (NY), Ser401, and Ala419.

The protein in the N-terminal section; belongs to the N-acetylglucosamine-1-phosphate uridyltransferase family. In the C-terminal section; belongs to the transferase hexapeptide repeat family. As to quaternary structure, homotrimer. Mg(2+) serves as cofactor.

The protein resides in the cytoplasm. The catalysed reaction is alpha-D-glucosamine 1-phosphate + acetyl-CoA = N-acetyl-alpha-D-glucosamine 1-phosphate + CoA + H(+). It catalyses the reaction N-acetyl-alpha-D-glucosamine 1-phosphate + UTP + H(+) = UDP-N-acetyl-alpha-D-glucosamine + diphosphate. Its pathway is nucleotide-sugar biosynthesis; UDP-N-acetyl-alpha-D-glucosamine biosynthesis; N-acetyl-alpha-D-glucosamine 1-phosphate from alpha-D-glucosamine 6-phosphate (route II): step 2/2. The protein operates within nucleotide-sugar biosynthesis; UDP-N-acetyl-alpha-D-glucosamine biosynthesis; UDP-N-acetyl-alpha-D-glucosamine from N-acetyl-alpha-D-glucosamine 1-phosphate: step 1/1. It functions in the pathway bacterial outer membrane biogenesis; LPS lipid A biosynthesis. Its function is as follows. Catalyzes the last two sequential reactions in the de novo biosynthetic pathway for UDP-N-acetylglucosamine (UDP-GlcNAc). The C-terminal domain catalyzes the transfer of acetyl group from acetyl coenzyme A to glucosamine-1-phosphate (GlcN-1-P) to produce N-acetylglucosamine-1-phosphate (GlcNAc-1-P), which is converted into UDP-GlcNAc by the transfer of uridine 5-monophosphate (from uridine 5-triphosphate), a reaction catalyzed by the N-terminal domain. The protein is Bifunctional protein GlmU of Burkholderia orbicola (strain AU 1054).